The chain runs to 329 residues: Cathepsin K (329 aa).

The first 15 residues, 1–15 (MWVFKFLLLPVVSFA), serve as a signal peptide directing secretion. The propeptide at 16–114 (LSPEETLDTQ…TLYTPEWEGR (99 aa)) is activation peptide. Residue Asn-103 is glycosylated (N-linked (GlcNAc...) asparagine). 2 cysteine pairs are disulfide-bonded: Cys-136–Cys-177 and Cys-170–Cys-210. The active site involves Cys-139. Residue Asn-213 is glycosylated (N-linked (GlcNAc...) asparagine). An intrachain disulfide couples Cys-269 to Cys-318. Catalysis depends on residues His-276 and Asn-296.

It belongs to the peptidase C1 family.

The protein localises to the lysosome. It is found in the secreted. The protein resides in the apical cell membrane. The catalysed reaction is Broad proteolytic activity. With small-molecule substrates and inhibitors, the major determinant of specificity is P2, which is preferably Leu, Met &gt; Phe, and not Arg.. Functionally, thiol protease involved in osteoclastic bone resorption and may participate partially in the disorder of bone remodeling. Displays potent endoprotease activity against fibrinogen at acid pH. May play an important role in extracellular matrix degradation. Involved in the release of thyroid hormone thyroxine (T4) by limited proteolysis of TG/thyroglobulin in the thyroid follicle lumen. The sequence is that of Cathepsin K (Ctsk) from Rattus norvegicus (Rat).